A 288-amino-acid polypeptide reads, in one-letter code: Eukaryotic translation initiation factor 3 subunit F-2 (288 aa).

In terms of domain architecture, MPN spans 12-149; the sequence is VLLHPLVLFQ…TRIFCAVATG (138 aa).

This sequence belongs to the eIF-3 subunit F family. In terms of assembly, component of the eukaryotic translation initiation factor 3 (eIF-3) complex. The eIF-3 complex interacts with pix.

The protein localises to the cytoplasm. In terms of biological role, component of the eukaryotic translation initiation factor 3 (eIF-3) complex, which is involved in protein synthesis of a specialized repertoire of mRNAs and, together with other initiation factors, stimulates binding of mRNA and methionyl-tRNAi to the 40S ribosome. The eIF-3 complex specifically targets and initiates translation of a subset of mRNAs involved in cell proliferation. In Drosophila pseudoobscura pseudoobscura (Fruit fly), this protein is Eukaryotic translation initiation factor 3 subunit F-2.